The primary structure comprises 231 residues: U1 small nuclear ribonucleoprotein C (231 aa).

The Matrin-type zinc finger occupies 4-36; sequence YYCEYCHSYLTHDTLSVRKSHLVGKNHLRITAD. The span at 49 to 61 shows a compositional bias: basic residues; it reads HNHKRRHIGKRGR. 3 disordered regions span residues 49 to 71, 137 to 177, and 205 to 231; these read HNHK…SQNE, PQRA…LEPP, and ESKK…RYGN.

Belongs to the U1 small nuclear ribonucleoprotein C family. As to quaternary structure, U1 snRNP is composed of the 7 core Sm proteins SMB1, SMD1, SMD2, SMD3, SME1, SMX3 and SMX2 (Sm proteins B, D1, D2, D3, E, F and G, respectively) that assemble in a heptameric protein ring on the Sm site of the small nuclear RNA to form the core snRNP, and at least 10 U1 snRNP-specific proteins SNP1/U1-70K, MUD1/U1-A, YHC1/U1-C, LUC7, NAM8, PRP39, PRP40, PRP42, SNU56 and SNU71. YHC1/U1-C interacts with U1 snRNA and the 5' splice-site region of the pre-mRNA.

The protein resides in the nucleus. Its function is as follows. Component of the spliceosomal U1 snRNP, which is essential for recognition of the pre-mRNA 5' splice-site and the subsequent assembly of the spliceosome. YHC1/U1-C is directly involved in initial 5' splice-site recognition for both constitutive and regulated alternative splicing. The interaction with the 5' splice-site seems to precede base-pairing between the pre-mRNA and the U1 snRNA. Stimulates commitment or early (E) complex formation by stabilizing the base pairing of the 5' end of the U1 snRNA and the 5' splice-site region. The polypeptide is U1 small nuclear ribonucleoprotein C (Saccharomyces cerevisiae (strain ATCC 204508 / S288c) (Baker's yeast)).